Consider the following 367-residue polypeptide: Voltage-gated potassium channel subunit beta-2 (367 aa).

Residues Thr56, Trp57, Gln63, and Asp85 each contribute to the NADP(+) site. Catalysis depends on Tyr90, which acts as the Proton donor/acceptor. NADP(+)-binding residues include Asn158, Ser188, Arg189, Gln214, Trp243, Ser244, Pro245, Leu246, Ala247, Cys248, Lys254, Tyr262, Arg264, Gly323, Ser325, Gln329, Glu332, and Asn333.

This sequence belongs to the shaker potassium channel beta subunit family. As to quaternary structure, forms heteromultimeric complex with alpha subunits.

It localises to the cytoplasm. Its subcellular location is the membrane. It is found in the cell membrane. The protein localises to the cell projection. The protein resides in the axon. It localises to the synapse. Its subcellular location is the synaptosome. It is found in the cytoskeleton. Regulatory subunit of the voltage-gated potassium (Kv) Shaker channels composed of pore-forming and potassium-conducting alpha subunits and of regulatory beta subunits. The beta-2/KCNAB2 cytoplasmic subunit may promote potassium channel closure via a mechanism that does not involve physical obstruction of the channel pore. Enhances current amplitude of Kv1.1/KCNA1 and Kv2.2/KCNA2 channels. May display nicotinamide adenine dinucleotide phosphate (NADPH)-dependent aldoketoreductase activity by catalyzing the NADPH-dependent reduction of a wide range of aldehyde and ketone substrates. The binding of oxidized and reduced nucleotide may alter Kv channel gating and contribute to dynamic fine tuning of cell excitability. The chain is Voltage-gated potassium channel subunit beta-2 (kcnab2) from Xenopus laevis (African clawed frog).